Here is a 316-residue protein sequence, read N- to C-terminus: tRNA methyltransferase 10 homolog B (316 aa).

Disordered regions lie at residues 1 to 30 and 42 to 98; these read MDCE…RDDG and VEYD…DLGN. The segment covering 63-82 has biased composition (basic residues); the sequence is VQRKQRHWERIVSSKKSKRK. Positions 75 to 96 form a coiled coil; the sequence is SSKKSKRKQERERRKIKRAEDL. A compositionally biased stretch (basic and acidic residues) spans 83 to 95; that stretch reads QERERRKIKRAED. Residues 113–310 enclose the SAM-dependent MTase TRM10-type domain; that stretch reads TKEKLLEAKH…KGVSPGKGYI (198 aa).

The protein belongs to the class IV-like SAM-binding methyltransferase superfamily. TRM10 family.

It catalyses the reaction guanosine(9) in tRNA + S-adenosyl-L-methionine = N(1)-methylguanosine(9) in tRNA + S-adenosyl-L-homocysteine + H(+). In terms of biological role, S-adenosyl-L-methionine-dependent guanine N(1)-methyltransferase that catalyzes the formation of N(1)-methylguanine at position 9 (m1G9) in tRNAs. Probably not able to catalyze formation of N(1)-methyladenine at position 9 (m1A9) in tRNAs. The sequence is that of tRNA methyltransferase 10 homolog B (Trmt10b) from Rattus norvegicus (Rat).